Consider the following 232-residue polypeptide: Dephospho-CoA kinase (232 aa).

The 204-residue stretch at Ile-3–Arg-206 folds into the DPCK domain. Gly-8–Ser-15 serves as a coordination point for ATP.

Belongs to the CoaE family.

The protein resides in the peroxisome. It carries out the reaction 3'-dephospho-CoA + ATP = ADP + CoA + H(+). Its pathway is cofactor biosynthesis; coenzyme A biosynthesis; CoA from (R)-pantothenate: step 5/5. Catalyzes the phosphorylation of the 3'-hydroxyl group of dephosphocoenzyme A to form coenzyme A. The sequence is that of Dephospho-CoA kinase from Arabidopsis thaliana (Mouse-ear cress).